The primary structure comprises 192 residues: Large ribosomal subunit protein uL5 (192 aa).

The protein belongs to the universal ribosomal protein uL5 family. As to quaternary structure, part of the 50S ribosomal subunit; part of the 5S rRNA/L5/L18/L25 subcomplex. Contacts the 5S rRNA and the P site tRNA. Forms a bridge to the 30S subunit in the 70S ribosome.

In terms of biological role, this is one of the proteins that bind and probably mediate the attachment of the 5S RNA into the large ribosomal subunit, where it forms part of the central protuberance. In the 70S ribosome it contacts protein S13 of the 30S subunit (bridge B1b), connecting the 2 subunits; this bridge is implicated in subunit movement. Contacts the P site tRNA; the 5S rRNA and some of its associated proteins might help stabilize positioning of ribosome-bound tRNAs. The protein is Large ribosomal subunit protein uL5 of Sphingopyxis alaskensis (strain DSM 13593 / LMG 18877 / RB2256) (Sphingomonas alaskensis).